We begin with the raw amino-acid sequence, 100 residues long: UPF0213 protein YhbQ (100 aa).

Residues 2-77 (TPWFLYLIRT…KQLTKRQKER (76 aa)) form the GIY-YIG domain.

Belongs to the UPF0213 family.

The sequence is that of UPF0213 protein YhbQ from Escherichia coli O1:K1 / APEC.